The primary structure comprises 628 residues: Siderophore iron transporter 1 (628 aa).

Transmembrane regions (helical) follow at residues 68-88 (IYRV…GLDG), 107-127 (LLST…IFFA), 132-152 (IFGR…GTII), 164-184 (VGGC…EVIA), 194-214 (LLAL…SGNV), 225-245 (GIGM…ICML), 285-305 (IIGM…FTLA), 317-337 (IIVP…LWEI), 354-374 (GIFF…MQGD), 394-414 (ITSL…FILI), 420-440 (KPFI…LVHY), 448-468 (SGII…TYVT), 488-508 (LYLA…GAVW), and 559-579 (KILC…AFML).

It belongs to the major facilitator superfamily.

It localises to the endosome membrane. Functionally, involved in the transport of siderophore ferrioxamine B and so has a role in iron homeostasis. The polypeptide is Siderophore iron transporter 1 (SIT1) (Saccharomyces cerevisiae (strain ATCC 204508 / S288c) (Baker's yeast)).